The chain runs to 101 residues: MIPGQYQIADGEIELNAGRRTLTLSVANSGDRPIQVGSHYHFFETNDALIFDRASTRGMRLNIPAGTAVRFEPGQSREVELVDLAGARRVFGFAGRVMGDL.

This sequence belongs to the urease beta subunit family. As to quaternary structure, heterotrimer of UreA (gamma), UreB (beta) and UreC (alpha) subunits. Three heterotrimers associate to form the active enzyme.

The protein resides in the cytoplasm. The catalysed reaction is urea + 2 H2O + H(+) = hydrogencarbonate + 2 NH4(+). The protein operates within nitrogen metabolism; urea degradation; CO(2) and NH(3) from urea (urease route): step 1/1. The polypeptide is Urease subunit beta (Ectopseudomonas mendocina (strain ymp) (Pseudomonas mendocina)).